Reading from the N-terminus, the 132-residue chain is Small ribosomal subunit protein uS11 (132 aa).

It belongs to the universal ribosomal protein uS11 family. In terms of assembly, part of the 30S ribosomal subunit. Interacts with proteins S7 and S18. Binds to IF-3.

Located on the platform of the 30S subunit, it bridges several disparate RNA helices of the 16S rRNA. Forms part of the Shine-Dalgarno cleft in the 70S ribosome. The polypeptide is Small ribosomal subunit protein uS11 (Chlamydia muridarum (strain MoPn / Nigg)).